Here is a 230-residue protein sequence, read N- to C-terminus: Translation initiation factor IF-3 (230 aa).

Disordered stretches follow at residues methionine 1 to arginine 21 and leucine 184 to arginine 230. Residues alanine 193–proline 208 are compositionally biased toward low complexity. Pro residues predominate over residues alanine 209–alanine 220. The span at proline 221–arginine 230 shows a compositional bias: low complexity.

The protein belongs to the IF-3 family. In terms of assembly, monomer.

It localises to the cytoplasm. Its function is as follows. IF-3 binds to the 30S ribosomal subunit and shifts the equilibrium between 70S ribosomes and their 50S and 30S subunits in favor of the free subunits, thus enhancing the availability of 30S subunits on which protein synthesis initiation begins. The chain is Translation initiation factor IF-3 from Anaeromyxobacter dehalogenans (strain 2CP-1 / ATCC BAA-258).